A 111-amino-acid polypeptide reads, in one-letter code: MTERITTPNADRTVQHHALPVDTTGLIFFAVFASSFVLYRRGSCFESYLFFSFPLSYFSNNRKKSRVQSDKQFFSVFKKNDPEQQHLYYAALMQFLTQLVESPTLFCVCTQ.

A helical membrane pass occupies residues 20-39; sequence PVDTTGLIFFAVFASSFVLY.

The protein localises to the membrane. This is an uncharacterized protein from Saccharomyces cerevisiae (strain ATCC 204508 / S288c) (Baker's yeast).